Reading from the N-terminus, the 166-residue chain is 3-isopropylmalate dehydratase small subunit 1 (166 aa).

The protein belongs to the LeuD family. LeuD type 2 subfamily. As to quaternary structure, heterodimer of LeuC and LeuD.

The catalysed reaction is (2R,3S)-3-isopropylmalate = (2S)-2-isopropylmalate. It functions in the pathway amino-acid biosynthesis; L-leucine biosynthesis; L-leucine from 3-methyl-2-oxobutanoate: step 2/4. Functionally, catalyzes the isomerization between 2-isopropylmalate and 3-isopropylmalate, via the formation of 2-isopropylmaleate. The polypeptide is 3-isopropylmalate dehydratase small subunit 1 (leuD1) (Thermotoga maritima (strain ATCC 43589 / DSM 3109 / JCM 10099 / NBRC 100826 / MSB8)).